The sequence spans 447 residues: Sporulation protein YpeB (447 aa).

This sequence belongs to the YpeB family.

Functionally, required for spore cortex hydrolysis during germination. Appears to be required for either expression, localization, activation or function of SleB. The sequence is that of Sporulation protein YpeB from Halalkalibacterium halodurans (strain ATCC BAA-125 / DSM 18197 / FERM 7344 / JCM 9153 / C-125) (Bacillus halodurans).